A 511-amino-acid polypeptide reads, in one-letter code: Tyrosine--tRNA ligase, chloroplastic/mitochondrial (511 aa).

Tyrosine 118 provides a ligand contact to L-tyrosine. Aspartate 122 is a binding site for ATP. Positions 123-132 (PTAESLHLGN) match the 'HIGH' region motif. The L-tyrosine site is built by aspartate 162, tyrosine 256, glutamine 260, aspartate 263, and glutamine 282. The 'KMSKS' region motif lies at 318–322 (KFGKS). ATP is bound at residue lysine 321. In terms of domain architecture, S4 RNA-binding spans 444–510 (LSIVDLSVSA…GKKNKVVVRI (67 aa)).

Belongs to the class-I aminoacyl-tRNA synthetase family.

The protein localises to the plastid. It is found in the chloroplast. It localises to the mitochondrion. It carries out the reaction tRNA(Tyr) + L-tyrosine + ATP = L-tyrosyl-tRNA(Tyr) + AMP + diphosphate + H(+). In terms of biological role, catalyzes the attachment of tyrosine to tRNA(Tyr) in a two-step reaction: tyrosine is first activated by ATP to form Tyr-AMP and then transferred to the acceptor end of tRNA(Tyr). This Arabidopsis thaliana (Mouse-ear cress) protein is Tyrosine--tRNA ligase, chloroplastic/mitochondrial.